The sequence spans 1190 residues: PAN2-PAN3 deadenylation complex catalytic subunit PAN2 (1190 aa).

WD repeat units follow at residues 24–63, 129–166, 167–207, 222–264, 266–306, and 322–361; these read TTIVNITSLQFDSVQNFIWCGDSRGYTRSFTGSFATNSLY, NKFNNLQAMTFNCNSFNDVVVGTDTSMMKFDLNKPNVL, SSFD…TMKT, GNYI…AIAP, PFPA…NVYL, and NNKPRMSNLEISENGDFLVFNDNCDNMHLWSISPSSKDFV. The tract at residues 364–511 is linker; that stretch reads PQPVEQPDII…FQYKFQGKLN (148 aa). The USP domain maps to 512–924; it reads KVPNCYSRLQ…KPIVIMYQQT (413 aa). One can recognise an Exonuclease domain in the interval 988-1158; it reads VAIDAEFVML…EDANTALLLY (171 aa). A divalent metal cation-binding residues include Asp991, Glu993, Asp1097, and Asp1150.

Belongs to the peptidase C19 family. PAN2 subfamily. As to quaternary structure, forms a heterotrimer with an asymmetric homodimer of the regulatory subunit PAN3 to form the poly(A)-nuclease (PAN) deadenylation complex. The cofactor is a divalent metal cation.

The protein resides in the cytoplasm. It catalyses the reaction Exonucleolytic cleavage of poly(A) to 5'-AMP.. Its activity is regulated as follows. Positively regulated by the regulatory subunit PAN3. Catalytic subunit of the poly(A)-nuclease (PAN) deadenylation complex, one of two cytoplasmic mRNA deadenylases involved in mRNA turnover. PAN specifically shortens poly(A) tails of RNA and the activity is stimulated by poly(A)-binding protein PAB1. PAN deadenylation is followed by rapid degradation of the shortened mRNA tails by the CCR4-NOT complex. Deadenylated mRNAs are then degraded by two alternative mechanisms, namely exosome-mediated 3'-5' exonucleolytic degradation, or deadenylation-dependent mRNA decaping and subsequent 5'-3' exonucleolytic degradation by XRN1. May also be involved in post-transcriptional maturation of mRNA poly(A) tails. The polypeptide is PAN2-PAN3 deadenylation complex catalytic subunit PAN2 (Candida albicans (strain SC5314 / ATCC MYA-2876) (Yeast)).